The following is a 485-amino-acid chain: UDP-N-acetylmuramate--L-alanine ligase (485 aa).

120-126 serves as a coordination point for ATP; it reads GSHGKTT.

Belongs to the MurCDEF family.

It is found in the cytoplasm. It catalyses the reaction UDP-N-acetyl-alpha-D-muramate + L-alanine + ATP = UDP-N-acetyl-alpha-D-muramoyl-L-alanine + ADP + phosphate + H(+). It functions in the pathway cell wall biogenesis; peptidoglycan biosynthesis. Its function is as follows. Cell wall formation. The sequence is that of UDP-N-acetylmuramate--L-alanine ligase from Rickettsia africae (strain ESF-5).